The sequence spans 74 residues: Small ribosomal subunit protein bS18 (74 aa).

The protein belongs to the bacterial ribosomal protein bS18 family. In terms of assembly, part of the 30S ribosomal subunit. Forms a tight heterodimer with protein bS6.

Functionally, binds as a heterodimer with protein bS6 to the central domain of the 16S rRNA, where it helps stabilize the platform of the 30S subunit. The protein is Small ribosomal subunit protein bS18 of Thioalkalivibrio sulfidiphilus (strain HL-EbGR7).